The primary structure comprises 309 residues: Foldase protein PrsA (309 aa).

An N-terminal signal peptide occupies residues 1 to 22 (MKTRSKLAAGFLTLMSVATLAA). A lipid anchor (N-palmitoyl cysteine) is attached at Cys23. The S-diacylglycerol cysteine moiety is linked to residue Cys23. Residues 146–241 (TPETSVQVIK…TSYYIIKVTD (96 aa)) enclose the PpiC domain.

This sequence belongs to the PrsA family.

It is found in the cell membrane. It carries out the reaction [protein]-peptidylproline (omega=180) = [protein]-peptidylproline (omega=0). In terms of biological role, plays a major role in protein secretion by helping the post-translocational extracellular folding of several secreted proteins. The protein is Foldase protein PrsA of Streptococcus agalactiae serotype V (strain ATCC BAA-611 / 2603 V/R).